The primary structure comprises 706 residues: MSCVHNNTSFPVQIEAYLKEVFEKYKELQESKDTSLTARFARALKYYQFLIYTAFSDPKFGIGQGENTRGLLIYHQMGMGKTILSLSLAISLSHIYNPILIAPKSLHSNFQQSLLKLIKLLYPETTDPSKELQKISRRFRFVSLDAYNMGQQIIKAGGSLNGCLLIVDEAHNLFRGIINSANDKTNARQLYNNIMQAKNIRILFLTGTPCSKDPFEMVPCFNMLSGRILLPLHYERFYTAYVNKTTNSPLNADKLLNRLVGMISYAGNQNELNKLFPTELPLIIEKVEMSPEQYRQYLLARDVENAEKHASSGMHEKINTAALCLPGSEQESGSSYYVRSRMISIFASEMLTIKEDEKLSEAVQQLPKEAFTETSSPKIVCMLKNIKTSPGPVLIYSQFVELGLHVVARFLEIEGYQCLQPLKVLEEGHNAILLHKDGKDLMVKNFAEDEPTHTLVLSSKITRFTLITGKILSKERDMIQQLWNSPLNIHGEVIKILLVSKTGAEGLDLKYGRQVHILEPYWDKAREDQVKARIIRIGSHDALPPEEKTVQPFLYIAVANQKMFYSIPEGSQEQKTIDERFHERGLEKSHLNSAFRDLLKRAAIECAFNGESGCLMCQPTNALLFHENFERDLRLPNPCQPLVKTEVKAYSISYEGKQFFYQKNKGVGLGYTFYEYNPIIKAYIEIKPSNPLYIKLIKHVQAGTTV.

The 166-residue stretch at 62–227 (IGQGENTRGL…VPCFNMLSGR (166 aa)) folds into the Helicase ATP-binding domain. Residue 75–82 (HQMGMGKT) participates in ATP binding. The short motif at 168–171 (DEAH) is the DEAH box element. Residues 378–599 (KIVCMLKNIK…HLNSAFRDLL (222 aa)) form the Helicase C-terminal domain.

This sequence belongs to the DEAD box helicase family. DEAH subfamily. As to quaternary structure, part of the viral DNA-directed RNA polymerase that consists of 8 polII-like subunits (RPB1, RPB2, RPB3, RPB5, RPB6, RPB7, RPB9, RPB10), a capping enzyme and a termination factor.

Its subcellular location is the virion. Its function is as follows. Putative DNA-dependent ATPase required for providing the needed energy to achieve the termination of early transcripts. In African swine fever virus (isolate Pig/Kenya/KEN-50/1950) (ASFV), this protein is Termination factor NPH-I homolog.